Here is a 219-residue protein sequence, read N- to C-terminus: Putative ankyrin repeat protein BB_0399 (219 aa).

ANK repeat units follow at residues 104-133, 137-166, and 170-199; these read YKIS…SLNQ, TGYS…DLSF, and NRKT…YIDD.

This is Putative ankyrin repeat protein BB_0399 from Borreliella burgdorferi (strain ATCC 35210 / DSM 4680 / CIP 102532 / B31) (Borrelia burgdorferi).